The following is a 363-amino-acid chain: Cysteine proteinase 15A (363 aa).

An N-terminal signal peptide occupies residues 1–18; that stretch reads MDRRFLFALFLFAAVATA. Residues 19 to 131 constitute a propeptide, activation peptide; that stretch reads VTDDTNNDDF…QKAPILPTTN (113 aa). 2 disulfides stabilise this stretch: Cys153–Cys203 and Cys187–Cys236. Cys156 is a catalytic residue. The N-linked (GlcNAc...) asparagine glycan is linked to Asn249. The cysteines at positions 292 and 347 are disulfide-linked. Residues His299 and Asn326 contribute to the active site.

The protein belongs to the peptidase C1 family.

This Pisum sativum (Garden pea) protein is Cysteine proteinase 15A.